A 376-amino-acid chain; its full sequence is Copper-containing nitrite reductase (376 aa).

The segment at residues 1 to 33 (MAEQMQISRRTILAGAALAGALAPVLATTSAWG) is a signal peptide (tat-type signal). Gln34 carries the post-translational modification Pyrrolidone carboxylic acid. 2 consecutive Plastocyanin-like domains span residues 34 to 211 (QGAV…YDKI) and 212 to 376 (YYVG…PSGT). Cu cation is bound by residues His131, His136, His171, Cys172, His181, Met186, and His342.

Belongs to the multicopper oxidase family. Homotrimer. Cu(2+) is required as a cofactor. The cofactor is Cu(+). FAD serves as cofactor. Post-translationally, predicted to be exported by the Tat system. The position of the signal peptide cleavage has been experimentally proven.

The protein localises to the periplasm. It catalyses the reaction nitric oxide + Fe(III)-[cytochrome c] + H2O = Fe(II)-[cytochrome c] + nitrite + 2 H(+). It participates in nitrogen metabolism; nitrate reduction (denitrification); dinitrogen from nitrate: step 2/4. In Alcaligenes faecalis, this protein is Copper-containing nitrite reductase (nirK).